Consider the following 115-residue polypeptide: NADH-ubiquinone oxidoreductase chain 3 (115 aa).

3 consecutive transmembrane segments (helical) span residues 3–23 (LALALMINTLLALLLMTITFW), 55–75 (FFLVAITFLLFDLEIALLLPL), and 86–106 (LTIASSLTLITILILSLAYEW).

Belongs to the complex I subunit 3 family. In terms of assembly, core subunit of respiratory chain NADH dehydrogenase (Complex I) which is composed of 45 different subunits. Interacts with TMEM186. Interacts with TMEM242.

The protein localises to the mitochondrion inner membrane. The catalysed reaction is a ubiquinone + NADH + 5 H(+)(in) = a ubiquinol + NAD(+) + 4 H(+)(out). Core subunit of the mitochondrial membrane respiratory chain NADH dehydrogenase (Complex I) which catalyzes electron transfer from NADH through the respiratory chain, using ubiquinone as an electron acceptor. Essential for the catalytic activity of complex I. This is NADH-ubiquinone oxidoreductase chain 3 from Hylobates lar (Lar gibbon).